Here is a 174-residue protein sequence, read N- to C-terminus: ATP-dependent protease subunit HslV (174 aa).

Thr2 is an active-site residue. 3 residues coordinate Na(+): Gly157, Cys160, and Thr163.

Belongs to the peptidase T1B family. HslV subfamily. As to quaternary structure, a double ring-shaped homohexamer of HslV is capped on each side by a ring-shaped HslU homohexamer. The assembly of the HslU/HslV complex is dependent on binding of ATP.

It is found in the cytoplasm. The catalysed reaction is ATP-dependent cleavage of peptide bonds with broad specificity.. Its activity is regulated as follows. Allosterically activated by HslU binding. Functionally, protease subunit of a proteasome-like degradation complex believed to be a general protein degrading machinery. In Shewanella frigidimarina (strain NCIMB 400), this protein is ATP-dependent protease subunit HslV.